Here is a 226-residue protein sequence, read N- to C-terminus: ATP synthase F(0) complex subunit a (226 aa).

The next 6 membrane-spanning stretches (helical) occupy residues 5–25 (LFASFIAPTILGLPAAVLIIL), 68–88 (WSLMLMWLIIFIATTNLLGLL), 97–117 (QLSMNLAMAIPLWAGAVTTGF), 138–158 (IPMLVIIETISLFIQPMALAV), 160–180 (LTANITAGHLLMHLIGSATLA), and 189–209 (TLIIFTVLILLTMLEIAVALI).

The protein belongs to the ATPase A chain family. As to quaternary structure, component of the ATP synthase complex composed at least of ATP5F1A/subunit alpha, ATP5F1B/subunit beta, ATP5MC1/subunit c (homooctomer), MT-ATP6/subunit a, MT-ATP8/subunit 8, ATP5ME/subunit e, ATP5MF/subunit f, ATP5MG/subunit g, ATP5MK/subunit k, ATP5MJ/subunit j, ATP5F1C/subunit gamma, ATP5F1D/subunit delta, ATP5F1E/subunit epsilon, ATP5PF/subunit F6, ATP5PB/subunit b, ATP5PD/subunit d, ATP5PO/subunit OSCP. ATP synthase complex consists of a soluble F(1) head domain (subunits alpha(3) and beta(3)) - the catalytic core - and a membrane F(0) domain - the membrane proton channel (subunits c, a, 8, e, f, g, k and j). These two domains are linked by a central stalk (subunits gamma, delta, and epsilon) rotating inside the F1 region and a stationary peripheral stalk (subunits F6, b, d, and OSCP). Interacts with DNAJC30; interaction is direct.

The protein localises to the mitochondrion inner membrane. It carries out the reaction H(+)(in) = H(+)(out). Subunit a, of the mitochondrial membrane ATP synthase complex (F(1)F(0) ATP synthase or Complex V) that produces ATP from ADP in the presence of a proton gradient across the membrane which is generated by electron transport complexes of the respiratory chain. ATP synthase complex consist of a soluble F(1) head domain - the catalytic core - and a membrane F(1) domain - the membrane proton channel. These two domains are linked by a central stalk rotating inside the F(1) region and a stationary peripheral stalk. During catalysis, ATP synthesis in the catalytic domain of F(1) is coupled via a rotary mechanism of the central stalk subunits to proton translocation. With the subunit c (ATP5MC1), forms the proton-conducting channel in the F(0) domain, that contains two crucial half-channels (inlet and outlet) that facilitate proton movement from the mitochondrial intermembrane space (IMS) into the matrix. Protons are taken up via the inlet half-channel and released through the outlet half-channel, following a Grotthuss mechanism. The polypeptide is ATP synthase F(0) complex subunit a (Gorilla gorilla gorilla (Western lowland gorilla)).